We begin with the raw amino-acid sequence, 297 residues long: uncharacterized protein (297 aa).

The next 9 membrane-spanning stretches (helical) occupy residues 1–21 (MSWIIFYTIIAALLILDLGII), 32–52 (GSILLSLFYFIISCLFGIYVY), 72–92 (AMALDNIFIISIIFQFFNIPS), 98–118 (VLFFGIIGVIIFKAIIIYGGI), 120–140 (LIHKFSWLLYILAVILIATGI), 194–214 (ILIETIDLVFAIDSIAAIFAI), 218–238 (VYIIYTSNIFAILGLRSLFFC), 253–273 (LALILIFIGFKIFIHHYIEIP), and 274–294 (AYISLTVTISSLLFGIIASIL).

It belongs to the TerC family.

Its subcellular location is the cell membrane. This is an uncharacterized protein from Rickettsia prowazekii (strain Madrid E).